A 469-amino-acid polypeptide reads, in one-letter code: Cytochrome c biogenesis protein CcsB (469 aa).

The next 3 helical transmembrane spans lie at L30–I50, T89–T109, and I175–S195.

The protein belongs to the Ccs1/CcsB family. In terms of assembly, may interact with CcsA.

The protein localises to the cellular thylakoid membrane. In terms of biological role, required during biogenesis of c-type cytochromes (cytochrome c6 and cytochrome f) at the step of heme attachment. The chain is Cytochrome c biogenesis protein CcsB from Synechococcus sp. (strain JA-2-3B'a(2-13)) (Cyanobacteria bacterium Yellowstone B-Prime).